The following is a 415-amino-acid chain: Histidine--tRNA ligase (415 aa).

The protein belongs to the class-II aminoacyl-tRNA synthetase family. In terms of assembly, homodimer.

It localises to the cytoplasm. It carries out the reaction tRNA(His) + L-histidine + ATP = L-histidyl-tRNA(His) + AMP + diphosphate + H(+). The protein is Histidine--tRNA ligase of Phytoplasma australiense.